Consider the following 245-residue polypeptide: Eukaryotic translation initiation factor 6 (245 aa).

Tyr-113 is modified (phosphotyrosine). A Phosphothreonine modification is found at Thr-165. Position 166 is a phosphoserine (Ser-166). Ser-174 and Ser-175 each carry phosphoserine; by CK1. Ser-235 bears the Phosphoserine; by PKC mark. Ser-239 and Ser-243 each carry phosphoserine.

It belongs to the eIF-6 family. Monomer. Associates with the 60S ribosomal subunit. Interacts with RACK1. Interacts with DICER1, AGO2, TARBP2, MOV10 and RPL7A; they form a large RNA-induced silencing complex (RISC). Phosphorylation at Ser-174 and Ser-175 by CSNK1D/CK1 promotes nuclear export. In terms of processing, ufmylated by UFL1. As to expression, detected in bladder, duodenum, liver, esophagus, pancreas, adipose tissue, megakaryocytes and testis with lower levels in muscle (at protein level).

The protein localises to the cytoplasm. Its subcellular location is the nucleus. It is found in the nucleolus. Binds to the 60S ribosomal subunit and prevents its association with the 40S ribosomal subunit to form the 80S initiation complex in the cytoplasm. Behaves as a stimulatory translation initiation factor downstream insulin/growth factors. Is also involved in ribosome biogenesis. Associates with pre-60S subunits in the nucleus and is involved in its nuclear export. Cytoplasmic release of TIF6 from 60S subunits and nuclear relocalization is promoted by a RACK1 (RACK1)-dependent protein kinase C activity. In tissues responsive to insulin, controls fatty acid synthesis and glycolysis by exerting translational control of adipogenic transcription factors such as CEBPB, CEBPD and ATF4 that have G/C rich or uORF in their 5'UTR. Required for ROS-dependent megakaryocyte maturation and platelets formation, controls the expression of mitochondrial respiratory chain genes involved in reactive oxygen species (ROS) synthesis. Involved in miRNA-mediated gene silencing by the RNA-induced silencing complex (RISC). Required for both miRNA-mediated translational repression and miRNA-mediated cleavage of complementary mRNAs by RISC. Modulates cell cycle progression and global translation of pre-B cells, its activation seems to be rate-limiting in tumorigenesis and tumor growth. The sequence is that of Eukaryotic translation initiation factor 6 (Eif6) from Mus musculus (Mouse).